The chain runs to 589 residues: ATP-dependent lipid A-core flippase (589 aa).

Transmembrane regions (helical) follow at residues 29 to 49, 70 to 90, 157 to 177, 261 to 281, and 283 to 303; these read LLLV…TGFL, WLPV…YITD, VIGA…TILV, MIGA…ALAG, and LTAG…PGLK. The ABC transmembrane type-1 domain occupies 32 to 314; sequence VAALIAALIE…LTNVQNMVQR (283 aa). Residues 346–582 enclose the ABC transporter domain; that stretch reads IEFRDVTARY…GGLYSHLHGM (237 aa). ATP is bound at residue 380-387; sequence GRSGSGKS.

This sequence belongs to the ABC transporter superfamily. Lipid exporter (TC 3.A.1.106) family. Homodimer.

It localises to the cell inner membrane. The enzyme catalyses ATP + H2O + lipid A-core oligosaccharideSide 1 = ADP + phosphate + lipid A-core oligosaccharideSide 2.. In terms of biological role, involved in lipopolysaccharide (LPS) biosynthesis. Translocates lipid A-core from the inner to the outer leaflet of the inner membrane. Transmembrane domains (TMD) form a pore in the inner membrane and the ATP-binding domain (NBD) is responsible for energy generation. The protein is ATP-dependent lipid A-core flippase of Xanthomonas axonopodis pv. citri (strain 306).